Consider the following 353-residue polypeptide: Protein MGF 360-11L (353 aa).

The protein belongs to the asfivirus MGF 360 family. Interacts with host TBK1 ad IRF7.

In terms of biological role, plays a role in virus cell tropism, and may be required for efficient virus replication in macrophages. In addition, inhibits the phosphorylation of host TBK1 and IRF7 and thereby negatively regulates the host cGAS signaling pathway and antagonizes IFN-mediated antiviral activity. This chain is Protein MGF 360-11L, found in Ornithodoros (relapsing fever ticks).